Reading from the N-terminus, the 477-residue chain is Bifunctional protein HldE (477 aa).

A ribokinase region spans residues 1-318; it reads MKVTLPEFER…ENAVRGRADT (318 aa). Lysine 179 carries the N6-acetyllysine modification. An ATP-binding site is contributed by 195-198; it reads NLSE. Residue aspartate 264 is part of the active site. The interval 344-477 is cytidylyltransferase; that stretch reads MTNGVFDILH…IKKIQQDKKG (134 aa).

The protein in the N-terminal section; belongs to the carbohydrate kinase PfkB family. This sequence in the C-terminal section; belongs to the cytidylyltransferase family. Homodimer.

The enzyme catalyses D-glycero-beta-D-manno-heptose 7-phosphate + ATP = D-glycero-beta-D-manno-heptose 1,7-bisphosphate + ADP + H(+). The catalysed reaction is D-glycero-beta-D-manno-heptose 1-phosphate + ATP + H(+) = ADP-D-glycero-beta-D-manno-heptose + diphosphate. It participates in nucleotide-sugar biosynthesis; ADP-L-glycero-beta-D-manno-heptose biosynthesis; ADP-L-glycero-beta-D-manno-heptose from D-glycero-beta-D-manno-heptose 7-phosphate: step 1/4. Its pathway is nucleotide-sugar biosynthesis; ADP-L-glycero-beta-D-manno-heptose biosynthesis; ADP-L-glycero-beta-D-manno-heptose from D-glycero-beta-D-manno-heptose 7-phosphate: step 3/4. Its function is as follows. Catalyzes the phosphorylation of D-glycero-D-manno-heptose 7-phosphate at the C-1 position to selectively form D-glycero-beta-D-manno-heptose-1,7-bisphosphate. Functionally, catalyzes the ADP transfer from ATP to D-glycero-beta-D-manno-heptose 1-phosphate, yielding ADP-D-glycero-beta-D-manno-heptose. This is Bifunctional protein HldE from Shigella sonnei (strain Ss046).